A 360-amino-acid chain; its full sequence is Transcriptional coactivator MYCFIDRAFT_190109 (360 aa).

The HTH iclR-type domain occupies 3-67 (GMALNQLLAC…GFLHEPRPGQ (65 aa)). The H-T-H motif DNA-binding region spans 33–52 (ARDVADLTGVPETQLCRVVR).

It localises to the nucleus. Its function is as follows. Transcriptional coactivator; part of the gene cluster that mediates the biosynthesis of an emodin derivative that may be involved in black Sigatoka disease of banana. With MYCFIDRAFT_198930, coregulates the production of the PKS8-1 cluster product. The sequence is that of Transcriptional coactivator MYCFIDRAFT_190109 from Pseudocercospora fijiensis (strain CIRAD86) (Black leaf streak disease fungus).